A 206-amino-acid chain; its full sequence is Large ribosomal subunit protein uL4 (206 aa).

Positions 63–97 are disordered; it reads MYKQKGTGRARHHSARAPQFRGGGKAHGPVVRSHE. The segment covering 64–77 has biased composition (basic residues); the sequence is YKQKGTGRARHHSA.

The protein belongs to the universal ribosomal protein uL4 family. Part of the 50S ribosomal subunit.

Functionally, one of the primary rRNA binding proteins, this protein initially binds near the 5'-end of the 23S rRNA. It is important during the early stages of 50S assembly. It makes multiple contacts with different domains of the 23S rRNA in the assembled 50S subunit and ribosome. Forms part of the polypeptide exit tunnel. The protein is Large ribosomal subunit protein uL4 of Rhizobium etli (strain ATCC 51251 / DSM 11541 / JCM 21823 / NBRC 15573 / CFN 42).